Reading from the N-terminus, the 356-residue chain is Peptide-N(4)-(N-acetyl-beta-glucosaminyl)asparagine amidase (356 aa).

Positions 129, 132, 163, and 166 each coordinate Zn(2+). Cys-189 functions as the Nucleophile in the catalytic mechanism. Catalysis depends on residues His-216 and Asp-233. Position 236 (Glu-236) interacts with substrate. The segment at 300–356 (IRQNLSPSEKEELKREDEAEERELASYNADEPQEAQMPRQSGSVEWTKARGEGGSDD) is disordered. Composition is skewed to basic and acidic residues over residues 307 to 316 (SEKEELKRED) and 346 to 356 (TKARGEGGSDD).

This sequence belongs to the transglutaminase-like superfamily. PNGase family. Zn(2+) serves as cofactor.

The protein localises to the cytoplasm. It catalyses the reaction Hydrolysis of an N(4)-(acetyl-beta-D-glucosaminyl)asparagine residue in which the glucosamine residue may be further glycosylated, to yield a (substituted) N-acetyl-beta-D-glucosaminylamine and a peptide containing an aspartate residue.. Functionally, specifically deglycosylates the denatured form of N-linked glycoproteins in the cytoplasm and assists their proteasome-mediated degradation. Cleaves the beta-aspartyl-glucosamine (GlcNAc) of the glycan and the amide side chain of Asn, converting Asn to Asp. Prefers proteins containing high-mannose over those bearing complex type oligosaccharides. Can recognize misfolded proteins in the endoplasmic reticulum that are exported to the cytosol to be destroyed and deglycosylate them, while it has no activity toward native proteins. Deglycosylation is a prerequisite for subsequent proteasome-mediated degradation of some, but not all, misfolded glycoproteins. In Yarrowia lipolytica (strain CLIB 122 / E 150) (Yeast), this protein is Peptide-N(4)-(N-acetyl-beta-glucosaminyl)asparagine amidase (PNG1).